We begin with the raw amino-acid sequence, 243 residues long: DNA repair protein RecO (243 aa).

This sequence belongs to the RecO family.

Its function is as follows. Involved in DNA repair and RecF pathway recombination. This Vibrio parahaemolyticus serotype O3:K6 (strain RIMD 2210633) protein is DNA repair protein RecO.